Reading from the N-terminus, the 125-residue chain is Small ribosomal subunit protein uS13 (125 aa).

Belongs to the universal ribosomal protein uS13 family. In terms of assembly, part of the 30S ribosomal subunit. Forms a loose heterodimer with protein S19. Forms two bridges to the 50S subunit in the 70S ribosome.

Functionally, located at the top of the head of the 30S subunit, it contacts several helices of the 16S rRNA. In the 70S ribosome it contacts the 23S rRNA (bridge B1a) and protein L5 of the 50S subunit (bridge B1b), connecting the 2 subunits; these bridges are implicated in subunit movement. Contacts the tRNAs in the A and P-sites. This Rickettsia massiliae (strain Mtu5) protein is Small ribosomal subunit protein uS13.